A 782-amino-acid polypeptide reads, in one-letter code: Lysosome membrane protein 2-C (782 aa).

Over 1 to 7 (MVANNKG) the chain is Cytoplasmic. Residues 8 to 28 (LLIAGLLLSVIGAALFVISLA) traverse the membrane as a helical segment. The Lumenal segment spans residues 29-739 (LLPSVLNVAT…QQFKQIQTVK (711 aa)). Asn-77, Asn-105, Asn-191, Asn-219, Asn-234, Asn-243, Asn-281, Asn-368, Asn-387, Asn-401, Asn-427, Asn-432, Asn-451, Asn-465, Asn-501, Asn-536, Asn-540, Asn-595, Asn-605, Asn-613, Asn-646, and Asn-692 each carry an N-linked (GlcNAc...) asparagine glycan. The chain crosses the membrane as a helical span at residues 740 to 760 (IAPVVVVSIFGGILLIAGLVM). Over 761–782 (AINGFRKTFYNNNQYNGYNIIN) the chain is Cytoplasmic. Positions 777 to 781 (GYNII) match the Tyrosine-type lysosomal sorting signal motif.

This sequence belongs to the CD36 family. Post-translationally, heavily glycosylated.

It localises to the lysosome membrane. May act as a lysosomal receptor. May be involved role in macropinocytosis and fluid phase exocytosis. The sequence is that of Lysosome membrane protein 2-C (lmpC) from Dictyostelium discoideum (Social amoeba).